The primary structure comprises 706 residues: Elongation factor G (706 aa).

In terms of domain architecture, tr-type G spans 8–295; that stretch reads ELYRNFGIMA…AVIDYLPSPL (288 aa). GTP-binding positions include 17-24, 92-96, and 146-149; these read AHIDAGKT, DTPGH, and NKMD.

Belongs to the TRAFAC class translation factor GTPase superfamily. Classic translation factor GTPase family. EF-G/EF-2 subfamily.

It is found in the cytoplasm. Functionally, catalyzes the GTP-dependent ribosomal translocation step during translation elongation. During this step, the ribosome changes from the pre-translocational (PRE) to the post-translocational (POST) state as the newly formed A-site-bound peptidyl-tRNA and P-site-bound deacylated tRNA move to the P and E sites, respectively. Catalyzes the coordinated movement of the two tRNA molecules, the mRNA and conformational changes in the ribosome. The chain is Elongation factor G from Ruegeria sp. (strain TM1040) (Silicibacter sp.).